A 324-amino-acid chain; its full sequence is 6-methylsalicylic acid decarboxylase (324 aa).

Zn(2+)-binding residues include histidine 7, histidine 9, histidine 157, and aspartate 274.

The protein belongs to the metallo-dependent hydrolases superfamily. ACMSD family. As to quaternary structure, monomer.

The protein resides in the cytoplasm. It localises to the cytosol. It catalyses the reaction 6-methylsalicylate + H(+) = 3-methylphenol + CO2. It functions in the pathway mycotoxin biosynthesis; patulin biosynthesis. Functionally, 6-methylsalicylic acid decarboxylase; part of the gene cluster that mediates the biosynthesis of patulin, an acetate-derived tetraketide mycotoxin produced by several fungal species that shows antimicrobial properties against several bacteria. PatG catalyzes the decarboxylation of 6-methylsalicylic acid to yield m-cresol. The pathway begins with the synthesis of 6-methylsalicylic acid by the polyketide synthase (PKS) patK via condensation of acetate and malonate units. The 6-methylsalicylic acid decarboxylase patG then catalyzes the decarboxylation of 6-methylsalicylic acid to yield m-cresol (also known as 3-methylphenol). These first reactions occur in the cytosol. The intermediate m-cresol is then transported into the endoplasmic reticulum where the cytochrome P450 monooxygenase patH converts it to m-hydroxybenzyl alcohol, which is further converted to gentisyl alcohol by the cytochrome P450 monooxygenase patI. The oxidoreductases patJ and patO further convert gentisyl alcohol to isoepoxydon in the vacuole. PatN catalyzes then the transformation of isoepoxydon into phyllostine. The cluster protein patF is responsible for the conversion from phyllostine to neopatulin whereas the alcohol dehydrogenase patD converts neopatulin to E-ascladiol. The steps between isoepoxydon and E-ascladiol occur in the cytosol, and E-ascladiol is probably secreted to the extracellular space by one of the cluster-specific transporters patC or patM. Finally, the secreted patulin synthase patE catalyzes the conversion of E-ascladiol to patulin. The protein is 6-methylsalicylic acid decarboxylase of Penicillium expansum (Blue mold rot fungus).